The sequence spans 426 residues: D-tagatose-1,6-bisphosphate aldolase subunit KbaZ (426 aa).

It belongs to the GatZ/KbaZ family. KbaZ subfamily. Forms a complex with KbaY.

It functions in the pathway carbohydrate metabolism; D-tagatose 6-phosphate degradation; D-glyceraldehyde 3-phosphate and glycerone phosphate from D-tagatose 6-phosphate: step 2/2. In terms of biological role, component of the tagatose-1,6-bisphosphate aldolase KbaYZ that is required for full activity and stability of the Y subunit. Could have a chaperone-like function for the proper and stable folding of KbaY. When expressed alone, KbaZ does not show any aldolase activity. The chain is D-tagatose-1,6-bisphosphate aldolase subunit KbaZ from Escherichia coli O127:H6 (strain E2348/69 / EPEC).